Reading from the N-terminus, the 234-residue chain is Phosphoribosylaminoimidazole-succinocarboxamide synthase (234 aa).

This sequence belongs to the SAICAR synthetase family.

The enzyme catalyses 5-amino-1-(5-phospho-D-ribosyl)imidazole-4-carboxylate + L-aspartate + ATP = (2S)-2-[5-amino-1-(5-phospho-beta-D-ribosyl)imidazole-4-carboxamido]succinate + ADP + phosphate + 2 H(+). It functions in the pathway purine metabolism; IMP biosynthesis via de novo pathway; 5-amino-1-(5-phospho-D-ribosyl)imidazole-4-carboxamide from 5-amino-1-(5-phospho-D-ribosyl)imidazole-4-carboxylate: step 1/2. This chain is Phosphoribosylaminoimidazole-succinocarboxamide synthase, found in Clostridium botulinum (strain Langeland / NCTC 10281 / Type F).